The following is a 254-amino-acid chain: Proteasome subunit alpha type-4 (254 aa).

Thr-60 carries the phosphothreonine modification. A disordered region spans residues Gln-235–His-254. The segment covering Glu-237 to Lys-248 has biased composition (basic and acidic residues).

Belongs to the peptidase T1A family. As to quaternary structure, the 26S proteasome consists of a 20S proteasome core and two 19S regulatory subunits. The 20S proteasome core is composed of 28 subunits that are arranged in four stacked rings, resulting in a barrel-shaped structure. The two end rings are each formed by seven alpha subunits, and the two central rings are each formed by seven beta subunits. The catalytic chamber with the active sites is on the inside of the barrel. Interacts with CIC1.

Its subcellular location is the cytoplasm. It is found in the nucleus. The proteasome degrades poly-ubiquitinated proteins in the cytoplasm and in the nucleus. It is essential for the regulated turnover of proteins and for the removal of misfolded proteins. The proteasome is a multicatalytic proteinase complex that is characterized by its ability to cleave peptides with Arg, Phe, Tyr, Leu, and Glu adjacent to the leaving group at neutral or slightly basic pH. It has an ATP-dependent proteolytic activity. The protein is Proteasome subunit alpha type-4 (PRE6) of Saccharomyces cerevisiae (strain ATCC 204508 / S288c) (Baker's yeast).